The chain runs to 152 residues: Toxin coregulated pilus biosynthesis protein S (152 aa).

The first 20 residues, 1–20 (MNIKLSFISIAFLSLSFNVA), serve as a signal peptide directing secretion.

Its subcellular location is the periplasm. The protein localises to the secreted. In terms of biological role, the toxin coregulated pilus (TCP) is essential for successful colonization of the small intestine. The chain is Toxin coregulated pilus biosynthesis protein S (tcpS) from Vibrio cholerae serotype O1 (strain ATCC 39315 / El Tor Inaba N16961).